Consider the following 278-residue polypeptide: Putative B3 domain-containing protein At2g21920 (278 aa).

Residues 168 to 275 constitute a DNA-binding region (TF-B3); it reads ISKTLSRTDV…KFIILNFEYN (108 aa).

Its subcellular location is the nucleus. This Arabidopsis thaliana (Mouse-ear cress) protein is Putative B3 domain-containing protein At2g21920.